The following is a 94-amino-acid chain: Integration host factor subunit beta (94 aa).

The protein belongs to the bacterial histone-like protein family. Heterodimer of an alpha and a beta chain.

In terms of biological role, this protein is one of the two subunits of integration host factor, a specific DNA-binding protein that functions in genetic recombination as well as in transcriptional and translational control. The protein is Integration host factor subunit beta of Brucella melitensis biotype 2 (strain ATCC 23457).